The primary structure comprises 268 residues: Ubiquinone/menaquinone biosynthesis C-methyltransferase UbiE (268 aa).

Residues 1–23 form a disordered region; it reads MTDQHAFATEQVQLDPTLSPTTE. Residues 10–23 show a composition bias toward polar residues; that stretch reads EQVQLDPTLSPTTE. S-adenosyl-L-methionine contacts are provided by residues Thr-91, Asp-112, 140–141, and Ser-157; that span reads NA.

It belongs to the class I-like SAM-binding methyltransferase superfamily. MenG/UbiE family.

The catalysed reaction is a 2-demethylmenaquinol + S-adenosyl-L-methionine = a menaquinol + S-adenosyl-L-homocysteine + H(+). The enzyme catalyses a 2-methoxy-6-(all-trans-polyprenyl)benzene-1,4-diol + S-adenosyl-L-methionine = a 5-methoxy-2-methyl-3-(all-trans-polyprenyl)benzene-1,4-diol + S-adenosyl-L-homocysteine + H(+). The protein operates within quinol/quinone metabolism; menaquinone biosynthesis; menaquinol from 1,4-dihydroxy-2-naphthoate: step 2/2. Its pathway is cofactor biosynthesis; ubiquinone biosynthesis. Methyltransferase required for the conversion of demethylmenaquinol (DMKH2) to menaquinol (MKH2) and the conversion of 2-polyprenyl-6-methoxy-1,4-benzoquinol (DDMQH2) to 2-polyprenyl-3-methyl-6-methoxy-1,4-benzoquinol (DMQH2). The polypeptide is Ubiquinone/menaquinone biosynthesis C-methyltransferase UbiE (Pasteurella multocida (strain Pm70)).